A 141-amino-acid polypeptide reads, in one-letter code: Hemoglobin subunit alpha (141 aa).

The Globin domain maps to 1–141 (VLSSKDKTNV…VSTVLTSKYR (141 aa)). A Phosphoserine modification is found at S3. K7 bears the N6-succinyllysine mark. Residue T8 is modified to Phosphothreonine. The residue at position 11 (K11) is an N6-succinyllysine. K16 bears the N6-acetyllysine; alternate mark. K16 is subject to N6-succinyllysine; alternate. Residue Y24 is modified to Phosphotyrosine. Residue K40 is modified to N6-succinyllysine. The residue at position 49 (S49) is a Phosphoserine. H58 serves as a coordination point for O2. H87 provides a ligand contact to heme b. S102 carries the phosphoserine modification. Phosphothreonine is present on T108. S124 bears the Phosphoserine mark. 2 positions are modified to phosphothreonine: T134 and T137. A Phosphoserine modification is found at S138.

It belongs to the globin family. As to quaternary structure, heterotetramer of two alpha chains and two beta chains. As to expression, red blood cells.

Involved in oxygen transport from the lung to the various peripheral tissues. Functionally, hemopressin acts as an antagonist peptide of the cannabinoid receptor CNR1. Hemopressin-binding efficiently blocks cannabinoid receptor CNR1 and subsequent signaling. The polypeptide is Hemoglobin subunit alpha (HBA) (Camelus dromedarius (Dromedary)).